The following is a 148-amino-acid chain: Cuticle protein CP1499 (148 aa).

Calcified shell.

The chain is Cuticle protein CP1499 from Cancer pagurus (Rock crab).